The following is a 363-amino-acid chain: Chorismate synthase (363 aa).

2 residues coordinate NADP(+): Arg-48 and Arg-54. Residues 125 to 127 (RSS), 237 to 238 (NA), Gly-277, 292 to 296 (KPTSS), and Arg-318 each bind FMN.

It belongs to the chorismate synthase family. In terms of assembly, homotetramer. FMNH2 is required as a cofactor.

It carries out the reaction 5-O-(1-carboxyvinyl)-3-phosphoshikimate = chorismate + phosphate. The protein operates within metabolic intermediate biosynthesis; chorismate biosynthesis; chorismate from D-erythrose 4-phosphate and phosphoenolpyruvate: step 7/7. Catalyzes the anti-1,4-elimination of the C-3 phosphate and the C-6 proR hydrogen from 5-enolpyruvylshikimate-3-phosphate (EPSP) to yield chorismate, which is the branch point compound that serves as the starting substrate for the three terminal pathways of aromatic amino acid biosynthesis. This reaction introduces a second double bond into the aromatic ring system. The polypeptide is Chorismate synthase (Ectopseudomonas mendocina (strain ymp) (Pseudomonas mendocina)).